We begin with the raw amino-acid sequence, 445 residues long: Chromosome partition protein MukF (445 aa).

A leucine-zipper region spans residues 213-241 (LSETSSTLRELQDTLQAASDELQTQILDI).

It belongs to the MukF family. In terms of assembly, interacts, and probably forms a ternary complex, with MukE and MukB via its C-terminal region. The complex formation is stimulated by calcium or magnesium. It is required for an interaction between MukE and MukB.

Its subcellular location is the cytoplasm. The protein resides in the nucleoid. Its function is as follows. Involved in chromosome condensation, segregation and cell cycle progression. May participate in facilitating chromosome segregation by condensation DNA from both sides of a centrally located replisome during cell division. Not required for mini-F plasmid partitioning. Probably acts via its interaction with MukB and MukE. Overexpression results in anucleate cells. It has a calcium binding activity. In Vibrio parahaemolyticus serotype O3:K6 (strain RIMD 2210633), this protein is Chromosome partition protein MukF.